A 198-amino-acid chain; its full sequence is Glycerol-3-phosphate acyltransferase (198 aa).

5 helical membrane passes run 10–30 (LIPI…WILV), 57–77 (GISF…ILIL), 86–106 (IMYL…WFLF), 118–138 (VVLS…AVVF), and 160–180 (AVTE…IVLI).

This sequence belongs to the PlsY family. Probably interacts with PlsX.

It localises to the cell inner membrane. It catalyses the reaction an acyl phosphate + sn-glycerol 3-phosphate = a 1-acyl-sn-glycero-3-phosphate + phosphate. It participates in lipid metabolism; phospholipid metabolism. Catalyzes the transfer of an acyl group from acyl-phosphate (acyl-PO(4)) to glycerol-3-phosphate (G3P) to form lysophosphatidic acid (LPA). This enzyme utilizes acyl-phosphate as fatty acyl donor, but not acyl-CoA or acyl-ACP. The sequence is that of Glycerol-3-phosphate acyltransferase from Anaplasma marginale (strain St. Maries).